Consider the following 359-residue polypeptide: Peptide chain release factor 1 (359 aa).

N5-methylglutamine is present on glutamine 236.

Belongs to the prokaryotic/mitochondrial release factor family. Post-translationally, methylated by PrmC. Methylation increases the termination efficiency of RF1.

The protein localises to the cytoplasm. Peptide chain release factor 1 directs the termination of translation in response to the peptide chain termination codons UAG and UAA. The polypeptide is Peptide chain release factor 1 (Streptococcus pneumoniae (strain Taiwan19F-14)).